A 2290-amino-acid chain; its full sequence is Autophagy-related protein 2 (2290 aa).

One can recognise a Chorein N-terminal domain in the interval 10 to 99 (WCKVMLQRYM…MCIEDLQLTF (90 aa)). A required for epg-6 binding region spans residues 829–1549 (DSMMKSVSAD…PNRDHSAFVV (721 aa)). Disordered regions lie at residues 1678-1727 (IGSK…LGDL), 1805-1851 (DDLF…DLTG), 1898-1919 (SETE…PARN), and 1967-2003 (EHGN…ERNK). The segment covering 1681-1692 (KKTTPKTSVSSS) has biased composition (low complexity). The span at 1714 to 1723 (RPSPVQPPTP) shows a compositional bias: pro residues. Low complexity predominate over residues 1810 to 1830 (QSYSSSSSETESESSAPQSSQ). The stretch at 1972 to 2011 (LDSIDNEDDNEKQKIEEEMEEDEKEEEEERNKEIQEAVER) forms a coiled coil. Acidic residues predominate over residues 1988-1999 (EEMEEDEKEEEE).

This sequence belongs to the ATG2 family. In terms of assembly, interacts with epg-6; the interaction is direct.

It is found in the preautophagosomal structure membrane. Its subcellular location is the lipid droplet. It localises to the endoplasmic reticulum membrane. The protein localises to the cytoplasm. The catalysed reaction is a 1,2-diacyl-sn-glycero-3-phospho-L-serine(in) = a 1,2-diacyl-sn-glycero-3-phospho-L-serine(out). It carries out the reaction a 1,2-diacyl-sn-glycero-3-phosphoethanolamine(in) = a 1,2-diacyl-sn-glycero-3-phosphoethanolamine(out). Lipid transfer protein involved in autophagosome assembly and in the distribution of atg-9 and atg-13 during the autophagy-mediated degradation of protein aggregates. Tethers the edge of the isolation membrane (IM) to the endoplasmic reticulum (ER) and mediates direct lipid transfer from ER to IM for IM expansion. Binds to the ER exit site (ERES), which is the membrane source for autophagosome formation, and extracts phospholipids from the membrane source to the IM for membrane expansion. Involved in autophagy-mediated degradation of ribosomal RNA and ribosomal proteins in lysosomes, which is essential for maintaining nucleotide homeostasis. This chain is Autophagy-related protein 2, found in Caenorhabditis elegans.